A 247-amino-acid polypeptide reads, in one-letter code: Probable transcriptional regulatory protein Gura_1416 (247 aa).

It belongs to the TACO1 family.

Its subcellular location is the cytoplasm. This is Probable transcriptional regulatory protein Gura_1416 from Geotalea uraniireducens (strain Rf4) (Geobacter uraniireducens).